The following is a 394-amino-acid chain: Homoserine O-succinyltransferase (394 aa).

Residues 54–368 (NAVLICHALS…SSPAGHDAFL (315 aa)) enclose the AB hydrolase-1 domain. S160 (nucleophile) is an active-site residue. R236 provides a ligand contact to substrate. Catalysis depends on residues D331 and H364. D365 contributes to the substrate binding site.

It belongs to the AB hydrolase superfamily. MetX family. In terms of assembly, homodimer.

Its subcellular location is the cytoplasm. The catalysed reaction is L-homoserine + succinyl-CoA = O-succinyl-L-homoserine + CoA. It functions in the pathway amino-acid biosynthesis; L-methionine biosynthesis via de novo pathway; O-succinyl-L-homoserine from L-homoserine: step 1/1. Functionally, transfers a succinyl group from succinyl-CoA to L-homoserine, forming succinyl-L-homoserine. This chain is Homoserine O-succinyltransferase, found in Magnetococcus marinus (strain ATCC BAA-1437 / JCM 17883 / MC-1).